A 360-amino-acid chain; its full sequence is S-adenosylmethionine decarboxylase proenzyme (360 aa).

Active-site residues include glutamate 13 and glutamate 16. Serine 73 (schiff-base intermediate with substrate; via pyruvic acid) is an active-site residue. Serine 73 is subject to Pyruvic acid (Ser); by autocatalysis. Cysteine 87 (proton donor; for catalytic activity) is an active-site residue. Catalysis depends on proton acceptor; for processing activity residues serine 236 and histidine 249.

It belongs to the eukaryotic AdoMetDC family. The cofactor is pyruvate. Post-translationally, is synthesized initially as an inactive proenzyme. Formation of the active enzyme involves a self-maturation process in which the active site pyruvoyl group is generated from an internal serine residue via an autocatalytic post-translational modification. Two non-identical subunits are generated from the proenzyme in this reaction, and the pyruvate is formed at the N-terminus of the alpha chain, which is derived from the carboxyl end of the proenzyme. The post-translation cleavage follows an unusual pathway, termed non-hydrolytic serinolysis, in which the side chain hydroxyl group of the serine supplies its oxygen atom to form the C-terminus of the beta chain, while the remainder of the serine residue undergoes an oxidative deamination to produce ammonia and the pyruvoyl group blocking the N-terminus of the alpha chain. As to expression, stolon, also expressed in leaves, stems and roots.

It carries out the reaction S-adenosyl-L-methionine + H(+) = S-adenosyl 3-(methylsulfanyl)propylamine + CO2. The protein operates within amine and polyamine biosynthesis; S-adenosylmethioninamine biosynthesis; S-adenosylmethioninamine from S-adenosyl-L-methionine: step 1/1. This chain is S-adenosylmethionine decarboxylase proenzyme (SAMDC), found in Solanum tuberosum (Potato).